We begin with the raw amino-acid sequence, 196 residues long: Large ribosomal subunit protein bL9c (196 aa).

The N-terminal 41 residues, 1–41 (MASTTSTLSLSWSNSFHSFAGAISEPQKSPENCRVMLPIVA), are a transit peptide targeting the chloroplast.

Component of the chloroplast large ribosomal subunit (LSU). Mature 70S chloroplast ribosomes of higher plants consist of a small (30S) and a large (50S) subunit. The 30S small subunit contains 1 molecule of ribosomal RNA (16S rRNA) and 24 different proteins. The 50S large subunit contains 3 rRNA molecules (23S, 5S and 4.5S rRNA) and 33 different proteins.

The protein resides in the plastid. It localises to the chloroplast. Its function is as follows. Component of the chloroplast ribosome (chloro-ribosome), a dedicated translation machinery responsible for the synthesis of chloroplast genome-encoded proteins, including proteins of the transcription and translation machinery and components of the photosynthetic apparatus. This chain is Large ribosomal subunit protein bL9c (RPL9), found in Spinacia oleracea (Spinach).